A 113-amino-acid chain; its full sequence is UPF0145 protein TK1926 (113 aa).

Belongs to the UPF0145 family.

This is UPF0145 protein TK1926 from Thermococcus kodakarensis (strain ATCC BAA-918 / JCM 12380 / KOD1) (Pyrococcus kodakaraensis (strain KOD1)).